The primary structure comprises 864 residues: Leucine--tRNA ligase (864 aa).

The 'HIGH' region signature appears at Pro-42 to His-52. The short motif at Lys-624–Ser-628 is the 'KMSKS' region element. Residue Lys-627 participates in ATP binding.

Belongs to the class-I aminoacyl-tRNA synthetase family.

The protein resides in the cytoplasm. The catalysed reaction is tRNA(Leu) + L-leucine + ATP = L-leucyl-tRNA(Leu) + AMP + diphosphate. The chain is Leucine--tRNA ligase from Burkholderia pseudomallei (strain 1106a).